Reading from the N-terminus, the 201-residue chain is Small ribosomal subunit protein uS4c (201 aa).

Positions 16–43 (GALPGLTSKKPRSASDLRNQSRSGKRSQ) are disordered. An S4 RNA-binding domain is found at 89–169 (MRLDNILFRL…LPKHLTLHSF (81 aa)).

The protein belongs to the universal ribosomal protein uS4 family. In terms of assembly, part of the 30S ribosomal subunit. Contacts protein S5. The interaction surface between S4 and S5 is involved in control of translational fidelity.

The protein resides in the plastid. The protein localises to the chloroplast. In terms of biological role, one of the primary rRNA binding proteins, it binds directly to 16S rRNA where it nucleates assembly of the body of the 30S subunit. Functionally, with S5 and S12 plays an important role in translational accuracy. The protein is Small ribosomal subunit protein uS4c (rps4) of Nymphaea alba (White water-lily).